The following is a 271-amino-acid chain: Eukaryotic translation initiation factor 2 subunit beta (271 aa).

Residues 223-247 form a C4-type zinc finger; it reads CLGCQSPDTILSKENRLFFLRCEKC.

The protein belongs to the eIF-2-beta/eIF-5 family. In terms of assembly, eukaryotic translation initiation factor 2 eIF2 is a heterotrimeric complex composed of an alpha, a beta and a gamma subunit.

It localises to the cytoplasm. Its subcellular location is the cytosol. Component of the eIF2 complex that functions in the early steps of protein synthesis by forming a ternary complex with GTP and initiator tRNA. This complex binds to a 40S ribosomal subunit, followed by mRNA binding to form a 43S pre-initiation complex (43S PIC). Junction of the 60S ribosomal subunit to form the 80S initiation complex is preceded by hydrolysis of the GTP bound to eIF2 and release of an eIF2-GDP binary complex. In order for eIF2 to recycle and catalyze another round of initiation, the GDP bound to eIF2 must exchange with GTP by way of a reaction catalyzed by eIF2B. The sequence is that of Eukaryotic translation initiation factor 2 subunit beta from Malus domestica (Apple).